Reading from the N-terminus, the 646-residue chain is Chaperone protein DnaK (646 aa).

At threonine 198 the chain carries Phosphothreonine; by autocatalysis. The disordered stretch occupies residues 603–646 (EQAQQAGGAEGFDPNAFQGGDAGQQKADDGVVDAEFTEVKDDKK). The segment covering 618 to 627 (AFQGGDAGQQ) has biased composition (low complexity).

This sequence belongs to the heat shock protein 70 family.

In terms of biological role, acts as a chaperone. The polypeptide is Chaperone protein DnaK (Acinetobacter baumannii (strain AB307-0294)).